The primary structure comprises 238 residues: 1-(5-phosphoribosyl)-5-[(5-phosphoribosylamino)methylideneamino] imidazole-4-carboxamide isomerase (238 aa).

Asp8 acts as the Proton acceptor in catalysis. Asp129 acts as the Proton donor in catalysis.

It belongs to the HisA/HisF family.

It is found in the cytoplasm. The catalysed reaction is 1-(5-phospho-beta-D-ribosyl)-5-[(5-phospho-beta-D-ribosylamino)methylideneamino]imidazole-4-carboxamide = 5-[(5-phospho-1-deoxy-D-ribulos-1-ylimino)methylamino]-1-(5-phospho-beta-D-ribosyl)imidazole-4-carboxamide. It participates in amino-acid biosynthesis; L-histidine biosynthesis; L-histidine from 5-phospho-alpha-D-ribose 1-diphosphate: step 4/9. This is 1-(5-phosphoribosyl)-5-[(5-phosphoribosylamino)methylideneamino] imidazole-4-carboxamide isomerase from Paracoccus denitrificans (strain Pd 1222).